A 377-amino-acid polypeptide reads, in one-letter code: Peroxisomal membrane protein PEX14 (377 aa).

The span at 1–20 (MASSEQAEQPSQPSSSPGSE) shows a compositional bias: low complexity. The segment at 1–23 (MASSEQAEQPSQPSSSPGSENVV) is disordered. Residue alanine 2 is modified to N-acetylalanine. Residues 2–108 (ASSEQAEQPS…CSPGSSRWRD (107 aa)) are Peroxisomal-facing. Lysine 34 bears the N6-acetyllysine mark. A helical membrane pass occupies residues 109 to 126 (YGALAIIMAGIAFGFHQL). Topologically, residues 127 to 377 (YKKYLLPLIL…EGASNESERH (251 aa)) are cytoplasmic. The tract at residues 230–377 (PPSPSAPKIP…EGASNESERH (148 aa)) is disordered. Position 232 is a phosphoserine (serine 232). Low complexity-rich tracts occupy residues 244-259 (PVKS…VNHH) and 265-275 (SPVSNESTSSS). A phosphoserine mark is found at serine 282 and serine 335. Acidic residues predominate over residues 323–342 (KEEEEEEEEEDVSHVDEEDV). Residues 360–377 (QVDKLRRPEGASNESERH) show a composition bias toward basic and acidic residues.

This sequence belongs to the peroxin-14 family. In terms of assembly, interacts with PEX13; forming the PEX13-PEX14 docking complex. Interacts with PEX5 (via WxxxF/Y motifs). Interacts with PEX19. Interacts with tubulin.

The protein localises to the peroxisome membrane. Functionally, component of the PEX13-PEX14 docking complex, a translocon channel that specifically mediates the import of peroxisomal cargo proteins bound to PEX5 receptor. The PEX13-PEX14 docking complex forms a large import pore which can be opened to a diameter of about 9 nm. Mechanistically, PEX5 receptor along with cargo proteins associates with the PEX14 subunit of the PEX13-PEX14 docking complex in the cytosol, leading to the insertion of the receptor into the organelle membrane with the concomitant translocation of the cargo into the peroxisome matrix. Plays a key role for peroxisome movement through a direct interaction with tubulin. The polypeptide is Peroxisomal membrane protein PEX14 (Cricetulus longicaudatus (Long-tailed dwarf hamster)).